The sequence spans 600 residues: 1,8-cineole synthase 1, chloroplastic (600 aa).

The transit peptide at 1 to 31 (MATLRISSALIYQNTLTHHFRLRRPHRFVCK) directs the protein to the chloroplast. Aspartate 342 contributes to the dimethylallyl diphosphate binding site. Positions 342 and 346 each coordinate Mg(2+). The DDXXD motif signature appears at 342 to 346 (DDIYD). Residues glutamate 420, arginine 484, and asparagine 487 each contribute to the dimethylallyl diphosphate site. Residues asparagine 487, threonine 491, and glutamate 495 each coordinate Mg(2+).

It belongs to the terpene synthase family. Tpsb subfamily. Mg(2+) serves as cofactor. It depends on Mn(2+) as a cofactor. As to expression, predominantly expressed in roots and at much lower levels in siliques. Not found in leaves, flowers or stems. Also detected in flowers in cv. Landsberg erecta. Not expressed in root apical meristem and elongation zone. Found in the vascular system of young roots and additionally in the cortex and epidermal cell layer of older roots.

Its subcellular location is the plastid. It is found in the chloroplast. The enzyme catalyses (2E)-geranyl diphosphate + H2O = 1,8-cineole + diphosphate. The protein operates within secondary metabolite biosynthesis; terpenoid biosynthesis. In terms of biological role, involved in monoterpene (C10) biosynthesis. The major product is 1,8-cineole (52%) followed by minor amounts of sabinene (14.5%), myrcene (13.3%), (-)-(1S)-beta-pinene (7.8%), (-)-(4S)-limonene (4.0%), (E)-beta-ocimene (2.7%), alpha-terpineol (2.4%), (-)-(1S)-alpha-pinene (1.9%), terpinolene (0.8%), and (+)-alpha-thujene (0.6%). The sequence is that of 1,8-cineole synthase 1, chloroplastic (TPS27) from Arabidopsis thaliana (Mouse-ear cress).